Here is a 487-residue protein sequence, read N- to C-terminus: Putative KilA-N domain-containing protein L37 (487 aa).

Residues 1–12 (MKVQKSSKKPLK) are compositionally biased toward basic residues. The segment at 1–137 (MKVQKSSKKP…DINSDDDNNL (137 aa)) is disordered. Positions 22-34 (KSGSKSMKSSKSS) are enriched in low complexity. Acidic residues-rich tracts occupy residues 47 to 77 (DSEISDNESFDSEISDSESSDNESSDNESSD) and 111 to 136 (VLDDESDDDNQSDNESSDINSDDDNN). The 110-residue stretch at 175-284 (EISKGIYGTF…HKVSKIVNDY (110 aa)) folds into the KilA-N domain. Residues 290–338 (FDKHEQLIKGKDDKIAELTRKIDKQTSLMKDQKSTIKEQDKKINELLSK) adopt a coiled-coil conformation.

The polypeptide is Putative KilA-N domain-containing protein L37 (Acanthamoeba polyphaga mimivirus (APMV)).